A 361-amino-acid polypeptide reads, in one-letter code: Serine/threonine-protein kinase SRK2B (361 aa).

One can recognise a Protein kinase domain in the interval 4–260 (YELVKDIGAG…IGDIKKHPWF (257 aa)). Residues 10-18 (IGAGNFGVA) and Lys33 contribute to the ATP site. Asp123 (proton acceptor) is an active-site residue. A Phosphoserine modification is found at Ser154. Residues 311 to 361 (AFGWGGGEDAEGKEEDAEEEVEEVEEEEDEEDEYDKTVKQVHASMGEVRVS) are disordered. The segment covering 318–344 (EDAEGKEEDAEEEVEEVEEEEDEEDEY) has biased composition (acidic residues).

This sequence belongs to the protein kinase superfamily. Ser/Thr protein kinase family. As to expression, expressed in seedlings.

The enzyme catalyses L-seryl-[protein] + ATP = O-phospho-L-seryl-[protein] + ADP + H(+). It catalyses the reaction L-threonyl-[protein] + ATP = O-phospho-L-threonyl-[protein] + ADP + H(+). This is Serine/threonine-protein kinase SRK2B (SRK2B) from Arabidopsis thaliana (Mouse-ear cress).